A 124-amino-acid polypeptide reads, in one-letter code: Protein RibT (124 aa).

The N-acetyltransferase domain occupies 3 to 124; it reads IRYKKSFEKI…QQDQDISYNN (122 aa).

Functionally, involved in riboflavin biosynthesis. The protein is Protein RibT (ribT) of Bacillus subtilis (strain 168).